The chain runs to 407 residues: Probable protein S-acyltransferase 9 (407 aa).

A run of 2 helical transmembrane segments spans residues 28 to 48 and 62 to 82; these read WSIP…SVFV and GHVF…LLFL. The 44-residue stretch at 136-179 folds into the DHHC domain; it reads KYCDTCMLYRPPRCSHCSICNNCVERFDHHCPWRNYRYFFMFVS. Cysteine 166 (S-palmitoyl cysteine intermediate) is an active-site residue. The next 2 membrane-spanning stretches (helical) occupy residues 174-194 and 217-237; these read FFMF…MSAL and AVML…LTGF. A disordered region spans residues 300-407; that stretch reads LATTWERPEE…RSYAAAEEGR (108 aa). Residues 346–356 show a composition bias toward basic and acidic residues; sequence DTAHHKIDIDQ.

It belongs to the DHHC palmitoyltransferase family. In terms of tissue distribution, mainly expressed in seeds.

It localises to the cell membrane. The catalysed reaction is L-cysteinyl-[protein] + hexadecanoyl-CoA = S-hexadecanoyl-L-cysteinyl-[protein] + CoA. Its function is as follows. Palmitoyl acyltransferase. This chain is Probable protein S-acyltransferase 9 (PAT09), found in Arabidopsis thaliana (Mouse-ear cress).